Consider the following 241-residue polypeptide: Ribosomal RNA small subunit methyltransferase G (241 aa).

S-adenosyl-L-methionine contacts are provided by residues glycine 79, phenylalanine 84, 130-131 (AE), and arginine 150.

The protein belongs to the methyltransferase superfamily. RNA methyltransferase RsmG family.

The protein localises to the cytoplasm. Specifically methylates the N7 position of a guanine in 16S rRNA. The chain is Ribosomal RNA small subunit methyltransferase G from Ligilactobacillus salivarius (strain UCC118) (Lactobacillus salivarius).